Here is a 681-residue protein sequence, read N- to C-terminus: MADSTGLQFTVKVGALPENTFVVAEFALDEALNRPFNLRLELASAQPDIDFGAVLDQPCELLVWYNGELQRRVCGVVSDFAQGDSGFRRTRYQLRVLPALWRLSLRQNSRIFQAQKPDEILSILLQEHGITDYAFALKNEHAKREYCVQYRESDLDFVNRLAAEEGMFYFHEFEAGKHRIVFADDAAALTQGPELFFNLGNRSLEQGPYVRQFHYREAVRPSDVELKDYSFKTPAYGLSHKKVGAELTHQRDTYQHFDFPGRYKEDPSGKAFAQHRLDALRNDAVAGQAKSNCAALLPGQSFSLTEHPNGSLNTDWQIVRIQHTGLQPQALEEEGGSGPTVYHNEFGVVKASTTWRARIGSPEAPHKPMVDGPQIAIVVGPDGEEIYCDEHGRVKLQFPWDRYGSSNDQSSCWVRVSQGWAGGQYGMMAIPRIGHEVIVSFLEGDPDQPIVTGRTYHATNRPPYELPANKTRTVLRTETHQGEGFNELRFEDQVGQEEIYIHGQKDLNVLIENDAAWHIKHDEHTDVDNERVTRIKANDHLTVEGEKRDQIKADYSLTVDTSMHQKLGDSWLTQAGQEVHVKAGAKVVLEAGSEITVKVGGCFIKVDGGGVTLVGPTIKMNSGGSPSSGSGWGGKSPVDPLGVSVPPKPKVPLTPAQLATMKSAAPFCEECEKCKEGGCEI.

Positions asparagine 621–proline 640 are disordered.

It belongs to the VgrG protein family.

The protein localises to the secreted. It carries out the reaction L-arginyl-[protein] + NAD(+) = N(omega)-(ADP-D-ribosyl)-L-arginyl-[protein] + nicotinamide + H(+). In terms of biological role, part of the type VI secretion system specialized secretion system, which delivers several virulence factors in both prokaryotic and eukaryotic cells during infection. Acts directly as an secreted effector with an actin ADP-ribosyltransferase activity that disrupts the host actin cytoskeleton, leading to a decrease in host cell viability and an increase in apoptosis. The chain is Type VI secretion system spike protein VgrG1 (vgrG1) from Aeromonas hydrophila.